A 184-amino-acid chain; its full sequence is ATP-dependent protease subunit HslV (184 aa).

T12 is an active-site residue. Na(+) contacts are provided by A166, C169, and T172.

The protein belongs to the peptidase T1B family. HslV subfamily. In terms of assembly, a double ring-shaped homohexamer of HslV is capped on each side by a ring-shaped HslU homohexamer. The assembly of the HslU/HslV complex is dependent on binding of ATP.

It is found in the cytoplasm. The enzyme catalyses ATP-dependent cleavage of peptide bonds with broad specificity.. Allosterically activated by HslU binding. In terms of biological role, protease subunit of a proteasome-like degradation complex believed to be a general protein degrading machinery. The sequence is that of ATP-dependent protease subunit HslV from Brucella anthropi (strain ATCC 49188 / DSM 6882 / CCUG 24695 / JCM 21032 / LMG 3331 / NBRC 15819 / NCTC 12168 / Alc 37) (Ochrobactrum anthropi).